The primary structure comprises 408 residues: uncharacterized protein (408 aa).

Positions 376-386 are enriched in polar residues; that stretch reads NELNDPNSVYN. Residues 376 to 408 are disordered; that stretch reads NELNDPNSVYNSPEFDHQGDQKKLTEENGCVVQ. Over residues 389-401 the composition is skewed to basic and acidic residues; it reads EFDHQGDQKKLTE.

This is an uncharacterized protein from Acanthamoeba polyphaga (Amoeba).